Reading from the N-terminus, the 171-residue chain is Regulator of ribonuclease activity A (171 aa).

This sequence belongs to the RraA family. Homotrimer. Binds to both RNA-binding sites in the C-terminal region of Rne and to RhlB.

Its subcellular location is the cytoplasm. Globally modulates RNA abundance by binding to RNase E (Rne) and regulating its endonucleolytic activity. Can modulate Rne action in a substrate-dependent manner by altering the composition of the degradosome. Modulates RNA-binding and helicase activities of the degradosome. This chain is Regulator of ribonuclease activity A, found in Vibrio cholerae serotype O1 (strain ATCC 39315 / El Tor Inaba N16961).